A 116-amino-acid polypeptide reads, in one-letter code: uncharacterized protein (116 aa).

This is an uncharacterized protein from Saccharomyces cerevisiae (strain ATCC 204508 / S288c) (Baker's yeast).